The primary structure comprises 120 residues: UPF0231 protein YacL (120 aa).

Belongs to the UPF0231 family.

The polypeptide is UPF0231 protein YacL (Escherichia coli O139:H28 (strain E24377A / ETEC)).